A 237-amino-acid polypeptide reads, in one-letter code: ATP-dependent dethiobiotin synthetase BioD (237 aa).

12–17 (DAGKTL) provides a ligand contact to ATP. A Mg(2+)-binding site is contributed by Thr-16. Residue Lys-37 is part of the active site. Substrate is bound at residue Ser-41. ATP-binding positions include Asp-54, 116 to 119 (EGAG), and 213 to 215 (PRL). Mg(2+) is bound by residues Asp-54 and Glu-116.

The protein belongs to the dethiobiotin synthetase family. As to quaternary structure, homodimer. Mg(2+) is required as a cofactor.

The protein localises to the cytoplasm. The catalysed reaction is (7R,8S)-7,8-diammoniononanoate + CO2 + ATP = (4R,5S)-dethiobiotin + ADP + phosphate + 3 H(+). The protein operates within cofactor biosynthesis; biotin biosynthesis; biotin from 7,8-diaminononanoate: step 1/2. Functionally, catalyzes a mechanistically unusual reaction, the ATP-dependent insertion of CO2 between the N7 and N8 nitrogen atoms of 7,8-diaminopelargonic acid (DAPA, also called 7,8-diammoniononanoate) to form a ureido ring. The sequence is that of ATP-dependent dethiobiotin synthetase BioD from Chromohalobacter salexigens (strain ATCC BAA-138 / DSM 3043 / CIP 106854 / NCIMB 13768 / 1H11).